The following is a 312-amino-acid chain: MLIRRPPDLLPSEITPEPLARGRRALLKGLGAGAALAGLGLPQISQAGSLGTLRPSPLSSDEKLTPLKSVTGYNNFYEFGTDKEDPARHAPGRLKTRPWTVTVEGEIKRPRTFSIDDLLKLAPLEERIYRMRCVEGWSMVIPWVGFPLAELIRQVEPNGQARFVEFVTLADPQQMPGVRSPLLDWPYVEGLRLDEAQHPLTLLAVGLYGEVLPAQNGAPIRLVVPWKYGFKSAKSIVRIRFVREQPRSTWMKAGPSEYGFYSNVNPAVDHPRWSQATERRIGEFIKRKTLPFNGYADQVAGLYSGMDLRRFF.

Residues 1–47 constitute a signal peptide (tat-type signal); that stretch reads MLIRRPPDLLPSEITPEPLARGRRALLKGLGAGAALAGLGLPQISQA. Residues Asn74, 77–78, Cys133, Thr168, Asn216, Arg221, and 232–234 contribute to the Mo-molybdopterin site; these read YE and SAK.

This sequence belongs to the MsrP family. In terms of assembly, heterodimer of a catalytic subunit (MsrP) and a heme-binding subunit (MsrQ). Requires Mo-molybdopterin as cofactor. In terms of processing, predicted to be exported by the Tat system. The position of the signal peptide cleavage has not been experimentally proven.

It is found in the periplasm. The catalysed reaction is L-methionyl-[protein] + a quinone + H2O = L-methionyl-(R)-S-oxide-[protein] + a quinol. In terms of biological role, part of the MsrPQ system that repairs oxidized periplasmic proteins containing methionine sulfoxide residues (Met-O), using respiratory chain electrons. Thus protects these proteins from oxidative-stress damage caused by reactive species of oxygen and chlorine generated by the host defense mechanisms. MsrPQ is essential for the maintenance of envelope integrity under bleach stress, rescuing a wide series of structurally unrelated periplasmic proteins from methionine oxidation. The catalytic subunit MsrP is non-stereospecific, being able to reduce both (R-) and (S-) diastereoisomers of methionine sulfoxide. Involved in protection against reactive chlorine species (RCS) generated by chlorite and hypochlorite. In Azospira oryzae (strain ATCC BAA-33 / DSM 13638 / PS) (Dechlorosoma suillum), this protein is Protein-methionine-sulfoxide reductase catalytic subunit MsrP.